The primary structure comprises 601 residues: Oligoendopeptidase F, plasmid (601 aa).

Zn(2+) is bound at residue His-387. Residue Glu-388 is part of the active site. The Zn(2+) site is built by His-391 and His-394.

The protein belongs to the peptidase M3B family. Zn(2+) is required as a cofactor.

In terms of biological role, hydrolyzes peptides containing between 7 and 17 amino acids with a rather wide specificity. This is Oligoendopeptidase F, plasmid (pepF1) from Lactococcus lactis subsp. cremoris (Streptococcus cremoris).